The following is a 509-amino-acid chain: Cytochrome P450 monooxygenase LUC2 (509 aa).

A helical transmembrane segment spans residues 30-50 (TKVLVTFLTIVIIAPRVFTVI). A heme-binding site is contributed by C456.

The protein belongs to the cytochrome P450 family. Heme serves as cofactor.

Its subcellular location is the membrane. It participates in mycotoxin biosynthesis. Its function is as follows. Cytochrome P450 monooxygenase; part of the gene cluster that mediates the biosynthesis of the mycotoxin lucilactaene and the lucilactaene-related compound NG-391 that act as cell cycle inhibitors with potent growth inhibitory activity against malarial parasites, moderate growth inhibitory activity against cancer cells, and no activity against bacteria and fungi. Within the pathway, LUC2 performs C-20 methyl group hydroxylation of several intermediates. LUC2 does not perform the full oxidation of the C-20 methyl group into carboxylic acid, which is a prerequisite for the final methylation step. The pathway begins with the hybrid PKS-NRPS synthetase LUC5 which is responsible for the condensation of one acetyl-coenzyme A (CoA) unit with six malonyl-CoA units and the amide linkage of the arising heptaketide and homoserine, subsequently releasing the first intermediate prelucilactaene B. Both the cytochrome P450 monooxygenase LUC2 and the hydrolase LUC6 function in parallel in modification of prelucilactaene B. LUC6 may catalyze the 2-pyrrolidone ring formation to form prelucilactaene C from prelucilactaene B, followed by C-15 hydroxylation by the same enzyme to give prelucilactaene D, which is then converted to prelucilactaene E by epoxidation, and finally to prelucilactaene F by cyclization. Prelucilactane D, prelucilactaene E, and prelucilactaene F can be converted to dihydrolucilactaene, NG391, and lucilactaene, respectively, via C-20 methyl group hydroxylation by the cytochrome P450 monooxygenase LUC2. However, LUC2, unlike FUS8 in fusarin C biosynthesis, is not enough for the full oxidation of the C-20 methyl group into carboxylic acid, which is a prerequisite for the final methylation step. The aldehyde dehydrogenase LUC3 is involved in the biosynthesis by further oxidation of the C-20 alcoholic analog prelucilactaene G into a carboxylic derivative. This unidentified carboxylic derivative may be converted to demethyllucilactaene. As the last step, the methyltransferase LUC1 methylates the hydroxyl group at C-21 of demethyllucilactaene to generate lucilactaene. In Fusarium sp, this protein is Cytochrome P450 monooxygenase LUC2.